The sequence spans 227 residues: Rho-related GTP-binding protein RhoN (227 aa).

14 to 21 is a GTP binding site; that stretch reads GDAECGKT. Residues 36 to 44 carry the Effector region motif; sequence YVPTVFENY. GTP is bound by residues 61-65 and 119-122; these read DTSGS and CKLD. Residues 186–227 are disordered; that stretch reads HRQLRRTDSRRGLQRSTQLSGRPDRGNEGEMHKDRAKSCNLM. Residues 207–227 are compositionally biased toward basic and acidic residues; that stretch reads RPDRGNEGEMHKDRAKSCNLM. Cysteine 224 carries the cysteine methyl ester modification. Cysteine 224 carries S-geranylgeranyl cysteine lipidation. The propeptide at 225 to 227 is removed in mature form; sequence NLM.

It belongs to the small GTPase superfamily. Rho family. Interacts with the Rho-GAP domain of RACGAP1. Interacts with UBXD5. Interacts with PRAG1. In terms of tissue distribution, expressed specifically in neurons in the brain and spinal cord and also in hepatic stellate cells.

The protein localises to the cytoplasmic vesicle. It localises to the secretory vesicle. It is found in the acrosome membrane. May be specifically involved in neuronal and hepatic functions. Is a C3 toxin-insensitive member of the Rho subfamily. The sequence is that of Rho-related GTP-binding protein RhoN (Rnd2) from Mus musculus (Mouse).